The following is a 365-amino-acid chain: MAGKSAEEEHPIKAYGWAVKDRTTGILSPFKFSRRATGDDDVRIKILYCGICHTDLASIKNEYEFLSYPLVPGMEIVGIATEVGKDVTKVKVGEKVALSAYLGCCGKCYSCVNELENYCPEVIIGYGTPYHDGTICYGGLSNETVANQSFVLRFPERLSPAGGAPLLSAGITSFSAMRNSGIDKPGLHVGVVGLGGLGHLAVKFAKAFGLKVTVISTTPSKKDDAINGLGADGFLLSRDDEQMKAAIGTLDAIIDTLAVVHPIAPLLDLLRSQGKFLLLGAPSQSLELPPIPLLSGGKSIIGSAAGNVKQTQEMLDFAAEHDITANVEIIPIEYINTAMERLDKGDVRYRFVVDIENTLTPPSEL.

The Zn(2+) site is built by Cys105, Cys108, Cys111, and Cys119. Residues Asn142 and Asn147 are each glycosylated (N-linked (GlcNAc...) asparagine). 12 residues coordinate NADP(+): Leu194, Gly196, Leu197, Ser216, Thr217, Thr218, Lys221, Leu279, Ala281, Ser303, Ala305, and Arg350.

It belongs to the zinc-containing alcohol dehydrogenase family. In terms of assembly, homodimer. Interaction with catharanthine synthase (CS) and tabersonine synthase (TS). Requires Zn(2+) as cofactor.

It is found in the cytoplasm. The protein resides in the cytosol. It carries out the reaction dihydroprecondylocarpine acetate + NADP(+) = precondylocarpine acetate + NADPH + H(+). The protein operates within alkaloid biosynthesis. In terms of biological role, component of the seco-iridoid and derivatives monoterpenoid indole alkaloids (MIAs, e.g. vinblastine, catharanthine, tabersonine, vincadifformine, vindoline, vincristine, quinine and strychnine) biosynthesis pathway. Catalyzes the non-canonical 1,4-reduction of an alpha,beta-unsaturated iminium moiety; by contrast with the classic alcohol dehydrogenase mechanism, this reaction does not require a catalytic zinc or proton relay. Converts precondylocarpine acetate to dihydroprecondylocarpine acetate, that is spontaneously converted into dehydrosecodine intermediate, precursor of angryline. May also trigger the non-stereoselective 1,4-reduction reaction at C15 of dehydrosecodine leading to the production of secodine, a precursor of vincadifformine. This is Dehydroprecondylocarpine acetate synthase from Catharanthus roseus (Madagascar periwinkle).